The following is a 231-amino-acid chain: Ribosomal RNA small subunit methyltransferase G (231 aa).

Positions 85, 90, and 154 each coordinate S-adenosyl-L-methionine.

The protein belongs to the methyltransferase superfamily. RNA methyltransferase RsmG family.

Its subcellular location is the cytoplasm. The enzyme catalyses guanosine(527) in 16S rRNA + S-adenosyl-L-methionine = N(7)-methylguanosine(527) in 16S rRNA + S-adenosyl-L-homocysteine. Its function is as follows. Specifically methylates the N7 position of guanine in position 527 of 16S rRNA. The sequence is that of Ribosomal RNA small subunit methyltransferase G from Rhodopseudomonas palustris (strain BisA53).